A 396-amino-acid polypeptide reads, in one-letter code: MANDYLFTSESVSEGHPDKVADQISDAILDAILAQDKYSRVAAETLCNTGLVVLAGEITTTANVDYIQVARNTIKRIGYDNTDYGIDYRGCAVLVAYDKQSPDIAQGVDRAHDNNLDQGAGDQGLMFGYACEETPELMPLPIHLSHRLVERQANLRRDGRLPWLRPDAKSQVTVRYVDGKPHSIDTVVLSTQHSPDIDLGTLREAVIEEVIKPTLPADLIKGDIKFLVNPTGRFVIGGPQGDCGLTGRKIIVDTYGGAAPHGGGAFSGKDPSKVDRSAAYAGRYVAKNIVAAGLASRCLIQVSYAIGVAQPTSVMVNTFGTGRVSDAVITRLVQEHFDLRPKGIIQMLDLLRPIYEKSAAYGHFGREEPEFTWESTDKALALAEAAGTEPVAALAE.

An ATP-binding site is contributed by histidine 16. Mg(2+) is bound at residue aspartate 18. A K(+)-binding site is contributed by glutamate 44. L-methionine contacts are provided by glutamate 57 and glutamine 100. The segment at 100-110 (QSPDIAQGVDR) is flexible loop. ATP contacts are provided by residues 167–169 (DAK), 233–234 (RF), aspartate 242, 248–249 (RK), alanine 265, and lysine 269. Aspartate 242 contributes to the L-methionine binding site. Position 273 (lysine 273) interacts with L-methionine.

It belongs to the AdoMet synthase family. Homotetramer; dimer of dimers. Mg(2+) is required as a cofactor. The cofactor is K(+).

The protein resides in the cytoplasm. The enzyme catalyses L-methionine + ATP + H2O = S-adenosyl-L-methionine + phosphate + diphosphate. It functions in the pathway amino-acid biosynthesis; S-adenosyl-L-methionine biosynthesis; S-adenosyl-L-methionine from L-methionine: step 1/1. In terms of biological role, catalyzes the formation of S-adenosylmethionine (AdoMet) from methionine and ATP. The overall synthetic reaction is composed of two sequential steps, AdoMet formation and the subsequent tripolyphosphate hydrolysis which occurs prior to release of AdoMet from the enzyme. This is S-adenosylmethionine synthase from Paraburkholderia xenovorans (strain LB400).